A 247-amino-acid polypeptide reads, in one-letter code: Flagellin B1 (247 aa).

Positions 1–20 (MNKLLRKVRKAFSLKADNKA) are excised as a propeptide.

Belongs to the archaeal flagellin family. Post-translationally, glycosylated.

It is found in the archaeal flagellum. In terms of biological role, flagellin is the subunit protein which polymerizes to form the filaments of archaeal flagella. This chain is Flagellin B1, found in Thermoplasma volcanium (strain ATCC 51530 / DSM 4299 / JCM 9571 / NBRC 15438 / GSS1).